Here is a 350-residue protein sequence, read N- to C-terminus: Geranylgeranyl pyrophosphate synthase (350 aa).

Isopentenyl diphosphate is bound by residues lysine 66, arginine 69, and histidine 98. Positions 105 and 109 each coordinate Mg(2+). A dimethylallyl diphosphate-binding site is contributed by arginine 114. Arginine 115 serves as a coordination point for isopentenyl diphosphate. Dimethylallyl diphosphate is bound by residues lysine 200, threonine 201, glutamine 236, asparagine 243, and lysine 263.

It belongs to the FPP/GGPP synthase family. It depends on Mg(2+) as a cofactor.

It carries out the reaction isopentenyl diphosphate + dimethylallyl diphosphate = (2E)-geranyl diphosphate + diphosphate. It catalyses the reaction isopentenyl diphosphate + (2E)-geranyl diphosphate = (2E,6E)-farnesyl diphosphate + diphosphate. The catalysed reaction is isopentenyl diphosphate + (2E,6E)-farnesyl diphosphate = (2E,6E,10E)-geranylgeranyl diphosphate + diphosphate. The protein operates within secondary metabolite biosynthesis; terpenoid biosynthesis. Functionally, geranylgeranyl pyrophosphate synthase; part of the gene cluster that mediates the biosynthesis of pleuromutilin, a tricyclic diterpene showing antibacterial properties. The geranylgeranyl diphosphate (GGPP) synthase catalyzes the first step in pleuromutilin biosynthesis. GGPP is then substrate of the premutilin synthase (PS) to yield premutilin. Premutilin synthase is a bifunctional enzyme composed of the fusion of a class II diterpene cyclase (DTC) and a class I diterpene synthase (DTS), with the corresponding domains and active sites containing characteristic aspartate-rich motifs. GGPP is first converted to mutildienyl-diphosphate (MPP) at the class II DTC site. MPP is subsequently further cyclized at the class I DTS site, followed by a 1,5-hydride shift and addition of water prior to terminating deprotonation, to yield premutilin. In addition to the aforementioned GGPP synthase and bifunctional diterpene synthase, the cluster also contains three cytochrome P450 monooxygenases, a short-chain alcohol dehydrogenase, and an acyltransferase, involved in the conversion of premutilin to pleuromutilin. The cytochrome P450 monooxygenases P450-1 and P450-2 hydroxylate premutilin at C-11 and C-3, respectively, producing 11-hydroxypremutilin and 3-hydroxypremutilin. The combination of the actions of both ple5 and ple6 leads to the production of 3,11-dihydroxypremutilin. The short chain dehydrogenase SDR further converts 3,11-dihydroxypremutilin into mutilin. The acetyltransferase ATF then acetylates mutilin to produce 14-O-acetylmutilin. Finally, the cytochrome P450 monooxygenase P450-3 catalyzes hydroxylation on the alpha position of the acetyl side chain of 14-O-acetylmutilin to yield pleuromutilin. The protein is Geranylgeranyl pyrophosphate synthase of Clitopilus passeckerianus (Pleurotus passeckerianus).